Here is a 130-residue protein sequence, read N- to C-terminus: Small ribosomal subunit protein uS9 (130 aa).

The protein belongs to the universal ribosomal protein uS9 family.

The protein is Small ribosomal subunit protein uS9 of Tolumonas auensis (strain DSM 9187 / NBRC 110442 / TA 4).